The primary structure comprises 299 residues: Apolipoprotein E (299 aa).

A signal peptide spans 1–18 (MKALWAVLVVTLLAGCRA). 8 consecutive repeat copies span residues 74–95 (VLMEDTMKEVKAYKNELEEELG), 96–117 (PVAEDTKARLSKELQGAQARLR), 118–139 (ADMEEVRNRLAHYSEEMQVMLG), 140–161 (QSPDELRARLGSHLRKLRKRLL), 162–183 (RDAEDLQKRLAVYKAGAREGAE), 184–205 (RGVSAIRERLGSLVEQSRVRAA), 206–223 (LTGQPLRERAQAWGERLR), and 224–245 (GRLEEVGGRARDRLDEVREQME). Residues 74–245 (VLMEDTMKEV…RLDEVREQME (172 aa)) form an 8 X 22 AA approximate tandem repeats region. The interval 152 to 162 (HLRKLRKRLLR) is LDL and other lipoprotein receptors binding. Residue 156–159 (LRKR) participates in heparin binding. Residues 204-273 (AALTGQPLRE…GWFEPMMEDM (70 aa)) form a lipid-binding and lipoprotein association region. Heparin is bound at residue 219–226 (GERLRGRL). The tract at residues 261–273 (RLKGWFEPMMEDM) is specificity for association with VLDL.

It belongs to the apolipoprotein A1/A4/E family. Homotetramer. May interact with ABCA1; functionally associated with ABCA1 in the biogenesis of HDLs. May interact with APP/A4 amyloid-beta peptide; the interaction is extremely stable in vitro but its physiological significance is unclear. May interact with MAPT. May interact with MAP2. In the cerebrospinal fluid, interacts with secreted SORL1. Interacts with PMEL; this allows the loading of PMEL luminal fragment on ILVs to induce fibril nucleation. In terms of processing, APOE exists as multiple glycosylated and sialylated glycoforms within cells and in plasma. The extent of glycosylation and sialylation are tissue and context specific. Post-translationally, glycated in plasma VLDL. Phosphorylated by FAM20C in the extracellular medium.

It localises to the secreted. The protein resides in the extracellular space. Its subcellular location is the extracellular matrix. The protein localises to the extracellular vesicle. It is found in the endosome. It localises to the multivesicular body. APOE is an apolipoprotein, a protein associating with lipid particles, that mainly functions in lipoprotein-mediated lipid transport between organs via the plasma and interstitial fluids. APOE is a core component of plasma lipoproteins and is involved in their production, conversion and clearance. Apolipoproteins are amphipathic molecules that interact both with lipids of the lipoprotein particle core and the aqueous environment of the plasma. As such, APOE associates with chylomicrons, chylomicron remnants, very low density lipoproteins (VLDL) and intermediate density lipoproteins (IDL) but shows a preferential binding to high-density lipoproteins (HDL). It also binds a wide range of cellular receptors including the LDL receptor/LDLR and the very low-density lipoprotein receptor/VLDLR that mediate the cellular uptake of the APOE-containing lipoprotein particles. Finally, APOE also has a heparin-binding activity and binds heparan-sulfate proteoglycans on the surface of cells, a property that supports the capture and the receptor-mediated uptake of APOE-containing lipoproteins by cells. The sequence is that of Apolipoprotein E (APOE) from Heterocephalus glaber (Naked mole rat).